We begin with the raw amino-acid sequence, 96 residues long: Aspartyl/glutamyl-tRNA(Asn/Gln) amidotransferase subunit C (96 aa).

This sequence belongs to the GatC family. Heterotrimer of A, B and C subunits.

It catalyses the reaction L-glutamyl-tRNA(Gln) + L-glutamine + ATP + H2O = L-glutaminyl-tRNA(Gln) + L-glutamate + ADP + phosphate + H(+). It carries out the reaction L-aspartyl-tRNA(Asn) + L-glutamine + ATP + H2O = L-asparaginyl-tRNA(Asn) + L-glutamate + ADP + phosphate + 2 H(+). Its function is as follows. Allows the formation of correctly charged Asn-tRNA(Asn) or Gln-tRNA(Gln) through the transamidation of misacylated Asp-tRNA(Asn) or Glu-tRNA(Gln) in organisms which lack either or both of asparaginyl-tRNA or glutaminyl-tRNA synthetases. The reaction takes place in the presence of glutamine and ATP through an activated phospho-Asp-tRNA(Asn) or phospho-Glu-tRNA(Gln). The chain is Aspartyl/glutamyl-tRNA(Asn/Gln) amidotransferase subunit C from Fusobacterium nucleatum subsp. nucleatum (strain ATCC 25586 / DSM 15643 / BCRC 10681 / CIP 101130 / JCM 8532 / KCTC 2640 / LMG 13131 / VPI 4355).